The following is a 139-amino-acid chain: ATP synthase epsilon chain (139 aa).

Belongs to the ATPase epsilon chain family. As to quaternary structure, F-type ATPases have 2 components, CF(1) - the catalytic core - and CF(0) - the membrane proton channel. CF(1) has five subunits: alpha(3), beta(3), gamma(1), delta(1), epsilon(1). CF(0) has three main subunits: a, b and c.

Its subcellular location is the cell inner membrane. Produces ATP from ADP in the presence of a proton gradient across the membrane. This is ATP synthase epsilon chain from Acinetobacter baumannii (strain SDF).